A 200-amino-acid chain; its full sequence is Late embryogenesis abundant protein 19 (200 aa).

Disordered regions lie at residues 1–145 (MASH…KTGS) and 172–200 (TEDEAGTDDGANKDTSATAAATETTARDH). 5 stretches are compositionally biased toward basic and acidic residues: residues 13–23 (GETKAHTEEKA), 30–42 (SKDKASEAKDRAS), 53–81 (QDTKEATKEKAQAAKERASETAQAAKDKT), 88–97 (ARDKAAESKD), and 105–114 (EKTEQAKQKA). The stretch at 52 to 81 (GQDTKEATKEKAQAAKERASETAQAAKDKT) forms a coiled coil. 2 stretches are compositionally biased toward low complexity: residues 115 to 130 (AETAGAAKQKTAETAQ) and 186 to 200 (TSATAAATETTARDH).

The protein belongs to the LEA type 4 family.

Involved in response to stress. This Oryza sativa subsp. japonica (Rice) protein is Late embryogenesis abundant protein 19.